Here is a 208-residue protein sequence, read N- to C-terminus: Uracil phosphoribosyltransferase (208 aa).

Residues R78, R103, and 130-138 each bind 5-phospho-alpha-D-ribose 1-diphosphate; that span reads DPMLATGGS. Residues I193 and 198–200 each bind uracil; that span reads GDA. D199 contributes to the 5-phospho-alpha-D-ribose 1-diphosphate binding site.

This sequence belongs to the UPRTase family. Requires Mg(2+) as cofactor.

The enzyme catalyses UMP + diphosphate = 5-phospho-alpha-D-ribose 1-diphosphate + uracil. It participates in pyrimidine metabolism; UMP biosynthesis via salvage pathway; UMP from uracil: step 1/1. Its activity is regulated as follows. Allosterically activated by GTP. Catalyzes the conversion of uracil and 5-phospho-alpha-D-ribose 1-diphosphate (PRPP) to UMP and diphosphate. The protein is Uracil phosphoribosyltransferase of Klebsiella pneumoniae (strain 342).